The chain runs to 391 residues: 3-ketoacyl-CoA thiolase (391 aa).

Catalysis depends on Cys-95, which acts as the Acyl-thioester intermediate. Catalysis depends on proton acceptor residues His-347 and Cys-377.

This sequence belongs to the thiolase-like superfamily. Thiolase family. Heterotetramer of two alpha chains (FadB) and two beta chains (FadA).

It localises to the cytoplasm. It catalyses the reaction an acyl-CoA + acetyl-CoA = a 3-oxoacyl-CoA + CoA. Its pathway is lipid metabolism; fatty acid beta-oxidation. Functionally, catalyzes the final step of fatty acid oxidation in which acetyl-CoA is released and the CoA ester of a fatty acid two carbons shorter is formed. The chain is 3-ketoacyl-CoA thiolase from Pseudomonas entomophila (strain L48).